The primary structure comprises 1353 residues: MNVLVQGAVHALGYYEDGKYSREPDCYESIRDLIRYLREDGDDHTARIECGRHNLVEQDLVPMVKCEDLTDDEFDIAIRLMVNLCQPAISTMRGKPPADRDQWKMYWELEENLRRAKTAFSDAHFFTAIKKRIDNYFIDTEYEDRDERLRLVVERIVLLIKYVFSINPDTSEGRRTRIEDSSHDRVIIAFLESGIDKTLMHIANQPREKEFHVTILDIFALILKEQTAEDLATKSEEVSTAEQKKTEEEFRKIIENHVVKETQKRKSFSRFGGSYTIKGLKGISANSSQVVFKPIQNVEKHNFLDDRKAKKRAPRNRRPFEIDTNSHFASSEVRGMLRDMVIRIIETCFNRLMKSSKTTVFVQVQKTSQINYFFLIKFVLRFVRLSRQDHLLERISECIGVEAFHENNVQLTEYVENATTLKGVEAKSHGLKAQYALGAYNELVLLHRYIYEHAKEENERKFAKRALEHIVNVEEYRELPIFIIKKFSSSVLSNNFLRELVLTTHHYMKLVERFVKTGALKKVTKKVKVRKATKKSKMSEEDVRSEFDGMSKKDLDRLWEESKGLVLQILKKEVPEMRGMNPIDSQLDVPVDAQQKFAKLSIQRSLRSRGFPAAVGLYHASRALWPESFKRGLTDFQDSPGEEDQLQELEQLLKADMKKVAKDLKKAESCKTCDEDPAYKKYDKMDATALQSLWEQSTDTLARILSHELPESESTSPVNWQLDITPDVQQKFAMLAIQRALRARDLPAAVGLYHTSRKLWPGDEAIFGAPGIGVEEEIAELKAILEADLHEVAREMKVAEDRAEDPDEEDPAEPYDSEQEEEEEVPAWKVEEIDFQFDSYVCKFSNVDVLKWYVFLLNDFSKNSTELNQALVKMLHRIAFDLKLPIKLYQVSLFQVFSKVNEHFTHLSKDLRKSSRLYELYQFGFHLLKKFFSKFTGDLAIEALFWKGPRECFEIENGYGSWVKSREADIRVWTEDLEIELRNLYEEYRTMETRDGIDVLDFIEHNLSRARSRKKVAKKLIEFGFDLLGAKWKNSDKARMDSVLPIGDIQKWYDEWKEAGARGDLVNVLQEKLNEDLGMEISRKKILKQLAHMDILYEKPKKEKPLPQWDTGLIEELKKLKEQYDDIPDALNMLGVNIVRYVMKRLSEKKPTRQVERHLESLGATIPERSKKSEKNGKKFDDFLNDDDDDSENDVGGGSEDDEEEEIVMKSKRIIPDSEDEEEHIEQEEAQKKLEKVAEKPNTLMGMIAGRKRKLAQLESDSSDESDDDDSAEKEEKKLPAAEDDSDLEEDAVIYKRSYVDALLTGGSIAGNGITETRRDTSEEREDDDDEDPFTKKLTFKRRIVMSDNEDEA.

3 disordered regions span residues 798 to 825, 1150 to 1291, and 1306 to 1335; these read VAED…EEEV, KPTR…LEED, and GGSI…DPFT. The span at 802 to 825 shows a compositional bias: acidic residues; sequence RAEDPDEEDPAEPYDSEQEEEEEV. Basic and acidic residues-rich tracts occupy residues 1150–1160 and 1168–1182; these read KPTRQVERHLE and ERSK…KFDD. 2 stretches are compositionally biased toward acidic residues: residues 1183–1206 and 1217–1226; these read FLND…EEEE and DSEDEEEHIE. The span at 1227-1239 shows a compositional bias: basic and acidic residues; sequence QEEAQKKLEKVAE. Composition is skewed to acidic residues over residues 1261-1273, 1282-1291, and 1323-1332; these read DSSD…DSAE, AEDDSDLEED, and EEREDDDDED.

It belongs to the timeless family. As to quaternary structure, associates with the cohesin complex. Interacts with smc-1, smc-3, scc-1 and scc-3.

It is found in the nucleus. Plays an important role in chromosome cohesion during both mitosis and meiosis. In prophase of meiosis, it is involved in the formation of the synaptonemal complex (SC) and specifically, in the diplotene and diakinesis phases of prophase, it stabilizes the association of homologous chromosomes during synapsis and sister chromatid cohesion. It regulates cohesin subunits to promote meiotic chromosome cohesion and localizes non-SMC (structural maintenance of chromosome) cohesin subunits to chromatin prior to or during pre-meiotic S phase. Implicated in influencing either the stability or loading of meiotic-specific cohesin subunit, rec8. Controls cell cycle exit and cell fusion to prevent the premature differentiation into adult cells. Specifically, regulates hypodermal seam cell identity. In Caenorhabditis elegans, this protein is Protein timeless homolog.